Here is a 184-residue protein sequence, read N- to C-terminus: Peptide deformylase (184 aa).

2 residues coordinate Fe cation: C98 and H140. E141 is an active-site residue. A Fe cation-binding site is contributed by H144.

It belongs to the polypeptide deformylase family. The cofactor is Fe(2+).

The enzyme catalyses N-terminal N-formyl-L-methionyl-[peptide] + H2O = N-terminal L-methionyl-[peptide] + formate. Its function is as follows. Removes the formyl group from the N-terminal Met of newly synthesized proteins. Requires at least a dipeptide for an efficient rate of reaction. N-terminal L-methionine is a prerequisite for activity but the enzyme has broad specificity at other positions. The sequence is that of Peptide deformylase from Bacteroides fragilis (strain ATCC 25285 / DSM 2151 / CCUG 4856 / JCM 11019 / LMG 10263 / NCTC 9343 / Onslow / VPI 2553 / EN-2).